The primary structure comprises 202 residues: Urease accessory protein UreG (202 aa).

A GTP-binding site is contributed by 11 to 18; the sequence is GPVGSGKT.

Belongs to the SIMIBI class G3E GTPase family. UreG subfamily. Homodimer. UreD, UreF and UreG form a complex that acts as a GTP-hydrolysis-dependent molecular chaperone, activating the urease apoprotein by helping to assemble the nickel containing metallocenter of UreC. The UreE protein probably delivers the nickel.

Its subcellular location is the cytoplasm. In terms of biological role, facilitates the functional incorporation of the urease nickel metallocenter. This process requires GTP hydrolysis, probably effectuated by UreG. This chain is Urease accessory protein UreG, found in Prochlorococcus marinus (strain MIT 9313).